The primary structure comprises 207 residues: MSAFPLIIGVDEAGRGPWAGPVTAAAVILDPAQPIEGLTDSKKLSEKARDRLAPLIRERALAWCVAEASVEEIDTLNIRQATFLAMRRAILGQSRTDQDRSGQFETVSATAGLILIDGNALPGDLPAPARAIIKGDLTEPAISAASILAKTHRDAQMASLCNLYPGYGFSGHKGYGTAAHAAALTRLGPCPVHRQSFAPVRALLRPC.

The RNase H type-2 domain occupies 5–207 (PLIIGVDEAG…APVRALLRPC (203 aa)). The a divalent metal cation site is built by Asp-11, Glu-12, and Asp-117.

The protein belongs to the RNase HII family. Mn(2+) serves as cofactor. Requires Mg(2+) as cofactor.

The protein resides in the cytoplasm. The catalysed reaction is Endonucleolytic cleavage to 5'-phosphomonoester.. In terms of biological role, endonuclease that specifically degrades the RNA of RNA-DNA hybrids. The sequence is that of Ribonuclease HII from Hyphomonas neptunium (strain ATCC 15444).